The following is a 139-amino-acid chain: Large ribosomal subunit protein uL16 (139 aa).

Belongs to the universal ribosomal protein uL16 family. Part of the 50S ribosomal subunit.

Its function is as follows. Binds 23S rRNA and is also seen to make contacts with the A and possibly P site tRNAs. The sequence is that of Large ribosomal subunit protein uL16 from Gloeothece citriformis (strain PCC 7424) (Cyanothece sp. (strain PCC 7424)).